The chain runs to 411 residues: MKVEILCVGTELLLGDILNTNAQFLAKEFGAMGFSMYHQAVVGDNVERLKREFELAINRADIVVTTGGLGPTDDDLTKETAAEYFNKKLIFHKESYDEIVKFFNKIGKEISENNKKQAYFPEGCTILKNDHGTAPGCIIDENDKVVILLPGPPREIIPMFRNYVIPYLRKYQEGTIVSKVLRVCGIGESGAAEMLKDLIDNQTNPTIAPYAKDNEVTFRITAKAESEEVAMKLIEPMERKVRERLKENVYGVGDTSLEDVLGAMLIEKKLTIATAESCTGGLLSGRLINYPGISEVFMEGAVTYSNEAKMNRLGVKKETLESYGAVSSETAAEMAKGIAKTAGTNIGVSTTGVAGPGGGTKEKPVGLVYVGLCINGKVKTRKLNMPGDRQTVRNRVVNAVIDWIRREIINL.

It belongs to the CinA family.

This chain is Putative competence-damage inducible protein, found in Clostridium acetobutylicum (strain ATCC 824 / DSM 792 / JCM 1419 / IAM 19013 / LMG 5710 / NBRC 13948 / NRRL B-527 / VKM B-1787 / 2291 / W).